A 627-amino-acid chain; its full sequence is tRNA uridine 5-carboxymethylaminomethyl modification enzyme MnmG (627 aa).

FAD is bound by residues 13 to 18 (GGGHAG), Val-125, and Ser-180. NAD(+) is bound at residue 274-288 (GPRYCPSIEDKVVRF). Position 371 (Gln-371) interacts with FAD.

It belongs to the MnmG family. In terms of assembly, homodimer. Heterotetramer of two MnmE and two MnmG subunits. The cofactor is FAD.

Its subcellular location is the cytoplasm. Functionally, NAD-binding protein involved in the addition of a carboxymethylaminomethyl (cmnm) group at the wobble position (U34) of certain tRNAs, forming tRNA-cmnm(5)s(2)U34. The protein is tRNA uridine 5-carboxymethylaminomethyl modification enzyme MnmG of Francisella philomiragia subsp. philomiragia (strain ATCC 25017 / CCUG 19701 / FSC 153 / O#319-036).